We begin with the raw amino-acid sequence, 444 residues long: Tubulin beta chain (444 aa).

Positions 1-4 match the MREI motif motif; that stretch reads MREI. Gln-11, Glu-69, Ser-138, Gly-142, Thr-143, Gly-144, Asn-204, and Asn-226 together coordinate GTP. Glu-69 contributes to the Mg(2+) binding site. Residues 421 to 444 form a disordered region; that stretch reads EYQQYQDATAEEEEDFNEEAEEEA. Positions 429-444 are enriched in acidic residues; that stretch reads TAEEEEDFNEEAEEEA. Position 438 is a 5-glutamyl polyglutamate (Glu-438).

This sequence belongs to the tubulin family. Dimer of alpha and beta chains. A typical microtubule is a hollow water-filled tube with an outer diameter of 25 nm and an inner diameter of 15 nM. Alpha-beta heterodimers associate head-to-tail to form protofilaments running lengthwise along the microtubule wall with the beta-tubulin subunit facing the microtubule plus end conferring a structural polarity. Microtubules usually have 13 protofilaments but different protofilament numbers can be found in some organisms and specialized cells. Mg(2+) serves as cofactor. In terms of processing, some glutamate residues at the C-terminus are polyglycylated, resulting in polyglycine chains on the gamma-carboxyl group. Glycylation is mainly limited to tubulin incorporated into axonemes (cilia and flagella) whereas glutamylation is prevalent in neuronal cells, centrioles, axonemes, and the mitotic spindle. Both modifications can coexist on the same protein on adjacent residues, and lowering polyglycylation levels increases polyglutamylation, and reciprocally. The precise function of polyglycylation is still unclear. Some glutamate residues at the C-terminus are polyglutamylated, resulting in polyglutamate chains on the gamma-carboxyl group. Polyglutamylation plays a key role in microtubule severing by spastin (SPAST). SPAST preferentially recognizes and acts on microtubules decorated with short polyglutamate tails: severing activity by SPAST increases as the number of glutamates per tubulin rises from one to eight, but decreases beyond this glutamylation threshold.

It is found in the cytoplasm. The protein localises to the cytoskeleton. Functionally, tubulin is the major constituent of microtubules, a cylinder consisting of laterally associated linear protofilaments composed of alpha- and beta-tubulin heterodimers. Microtubules grow by the addition of GTP-tubulin dimers to the microtubule end, where a stabilizing cap forms. Below the cap, tubulin dimers are in GDP-bound state, owing to GTPase activity of alpha-tubulin. The protein is Tubulin beta chain (tubb) of Xenopus laevis (African clawed frog).